Here is a 279-residue protein sequence, read N- to C-terminus: Ribonuclease Z (279 aa).

Residues His64, His66, Asp68, His69, His134, Asp191, and His245 each coordinate Zn(2+). Catalysis depends on Asp68, which acts as the Proton acceptor.

This sequence belongs to the RNase Z family. Homodimer. Zn(2+) is required as a cofactor.

The catalysed reaction is Endonucleolytic cleavage of RNA, removing extra 3' nucleotides from tRNA precursor, generating 3' termini of tRNAs. A 3'-hydroxy group is left at the tRNA terminus and a 5'-phosphoryl group is left at the trailer molecule.. In terms of biological role, zinc phosphodiesterase, which displays some tRNA 3'-processing endonuclease activity. Probably involved in tRNA maturation, by removing a 3'-trailer from precursor tRNA. The polypeptide is Ribonuclease Z (Methanopyrus kandleri (strain AV19 / DSM 6324 / JCM 9639 / NBRC 100938)).